We begin with the raw amino-acid sequence, 185 residues long: Translation initiation factor IF-3 (185 aa).

It belongs to the IF-3 family. Monomer.

The protein resides in the cytoplasm. Functionally, IF-3 binds to the 30S ribosomal subunit and shifts the equilibrium between 70S ribosomes and their 50S and 30S subunits in favor of the free subunits, thus enhancing the availability of 30S subunits on which protein synthesis initiation begins. This chain is Translation initiation factor IF-3, found in Coxiella burnetii (strain RSA 493 / Nine Mile phase I).